A 213-amino-acid chain; its full sequence is Validoxylamine A 7'-phosphate phosphatase (213 aa).

Aspartate 8 serves as the catalytic Nucleophile. Aspartate 8 and aspartate 10 together coordinate a divalent metal cation. Substrate is bound by residues 8–10 (DLD), 107–108 (TS), and lysine 140. The Proton donor role is filled by aspartate 10. Residue aspartate 165 coordinates a divalent metal cation.

Belongs to the HAD-like hydrolase superfamily. CbbY/CbbZ/Gph/YieH family. Requires Mg(2+) as cofactor. Mn(2+) serves as cofactor. It depends on Co(2+) as a cofactor.

The catalysed reaction is validoxylamine A 7'-phosphate + H2O = validoxylamine A + phosphate. In terms of biological role, involved in the biosynthesis of the antifungal agent validamycin A. Catalyzes the dephosphorylation of validoxylamine A 7'-phosphate to yield validoxylamine A. VldH is also able to convert trehalose 6-phosphate to trehalose. In Streptomyces hygroscopicus subsp. limoneus, this protein is Validoxylamine A 7'-phosphate phosphatase.